We begin with the raw amino-acid sequence, 119 residues long: MARVKRGTMVRKRHKKLLKQAKGYRGARSRHYKVAHEAVMHALADAYRDRRRRKRDFRRLWIMRINAAARLNGTTYSRLVNALKQANIQIDRKMLADLAVRDPQAFSRIVQQAQAAVTA.

This sequence belongs to the bacterial ribosomal protein bL20 family.

Functionally, binds directly to 23S ribosomal RNA and is necessary for the in vitro assembly process of the 50S ribosomal subunit. It is not involved in the protein synthesizing functions of that subunit. The protein is Large ribosomal subunit protein bL20 of Chloroflexus aggregans (strain MD-66 / DSM 9485).